A 760-amino-acid polypeptide reads, in one-letter code: Leucine-rich repeat extensin-like protein 3 (760 aa).

An N-terminal signal peptide occupies residues M1–A20. N16 is a glycosylation site (N-linked (GlcNAc...) asparagine). The LRR 1 repeat unit spans residues L21 to E45. N-linked (GlcNAc...) asparagine glycosylation is found at N86 and N98. LRR repeat units lie at residues I113 to L137, S138 to R160, L161 to L185, P186 to K209, L211 to S232, V234 to M255, K256 to L279, N281 to M303, and V304 to L327. An N-linked (GlcNAc...) asparagine glycan is attached at N281. Residue N332 is glycosylated (N-linked (GlcNAc...) asparagine). Disordered stretches follow at residues G389–P502, P515–P610, and P663–G748. Composition is skewed to pro residues over residues P394–P415 and L423–P502. The interval S409–P758 is contains the Ser-Pro(4) repeats. The span at P663–P745 shows a compositional bias: pro residues.

Interacts with SH3P1. In terms of processing, hydroxylated on proline residues in the S-P-P-P-P repeat. Post-translationally, O-glycosylated on hydroxyprolines. Expressed in roots, stems, leaves and flowers, mostly in vascular tissues.

It localises to the secreted. The protein resides in the cell wall. Modulates cell morphogenesis by regulating cell wall formation and assembly, and/or growth polarization. In Arabidopsis thaliana (Mouse-ear cress), this protein is Leucine-rich repeat extensin-like protein 3 (LRX3).